The following is a 117-amino-acid chain: Calcitonin receptor-stimulating peptide 2 (117 aa).

The signal sequence occupies residues 1 to 25 (MGFWKFPPFLVLSILVLYQAGMFHT). A propeptide spanning residues 26 to 79 (APVRLPLESSFDSATLTEEEVSLLLVAMVKDYVQMKATVLEQESEDFSITAQEK) is cleaved from the precursor. Cysteine 81 and cysteine 86 are oxidised to a cystine.

This sequence belongs to the calcitonin family. As to expression, mainly expressed in the thyroid gland and CNS. Found in the nerve cells of the cerebrum, hippocampus, hypothalamus, pons/midbrain and thalamus. Also detected in the glia-like cells of pons/midbrain and in meninx of tactus opticus.

Its subcellular location is the secreted. The sequence is that of Calcitonin receptor-stimulating peptide 2 (CRSP2) from Sus scrofa (Pig).